The sequence spans 354 residues: MIDWITSQGQGLLGAYWTPLWILIRAVIIVVPLLLCVAYLILWERKLIGWMHVRIGPNRVGPLGLLQPIADVLKLLLKEVMMPTQVSRGMYLIAPLMVLMPAVAVWAVIPFQAEVVLADVNAGLLYVMAISSVGVYGVILAGWASNSKYAFIGAMRAAAQMVSYEIAMGFALVTVLMVAGSLNLSAIVNGQNTGYFADMGINILSWNWLPLLPMFGVYFISGVAETNRHPFDVVEGESEIVAGHMIEYSGMGFALFFLAEYINMIIISTMTALMFLGGWAPPIDSVLTNAIPGFFWLVIKVFLLLSVFIWIRASFPRYRYDQIMRLGWKVFIPLTVAWLIIVAIWIKSPWNIWH.

8 helical membrane passes run 22-42 (ILIRAVIIVVPLLLCVAYLIL), 91-111 (YLIAPLMVLMPAVAVWAVIPF), 124-144 (LLYVMAISSVGVYGVILAGWA), 168-188 (MGFALVTVLMVAGSLNLSAIV), 203-223 (ILSWNWLPLLPMFGVYFISGV), 255-275 (LFFLAEYINMIIISTMTALMF), 291-311 (IPGFFWLVIKVFLLLSVFIWI), and 326-346 (LGWKVFIPLTVAWLIIVAIWI).

This sequence belongs to the complex I subunit 1 family. As to quaternary structure, NDH-1 is composed of 14 different subunits. Subunits NuoA, H, J, K, L, M, N constitute the membrane sector of the complex.

It is found in the cell inner membrane. The enzyme catalyses a quinone + NADH + 5 H(+)(in) = a quinol + NAD(+) + 4 H(+)(out). Its function is as follows. NDH-1 shuttles electrons from NADH, via FMN and iron-sulfur (Fe-S) centers, to quinones in the respiratory chain. The immediate electron acceptor for the enzyme in this species is believed to be ubiquinone. Couples the redox reaction to proton translocation (for every two electrons transferred, four hydrogen ions are translocated across the cytoplasmic membrane), and thus conserves the redox energy in a proton gradient. This subunit may bind ubiquinone. This is NADH-quinone oxidoreductase subunit H from Cupriavidus necator (strain ATCC 17699 / DSM 428 / KCTC 22496 / NCIMB 10442 / H16 / Stanier 337) (Ralstonia eutropha).